The sequence spans 376 residues: Pulmonary surfactant-associated protein B (376 aa).

The signal sequence occupies residues 1 to 24 (MAKLHLQWLLLLPTLCSLGAATES). The region spanning 25-63 (ASSPDCAQGPKFWCQSLEQAIQCRALGHCLQEVWGHAGA) is the Saposin A-type domain. Positions 25-190 (ASSPDCAQGP…PHTQDLSEQQ (166 aa)) are excised as a propeptide. Saposin B-type domains lie at 63-145 (ANDL…PLGQ), 194-271 (PLPF…STAD), and 290-365 (QDTE…EAPA). Disulfide bonds link C67-C141, C70-C135, C98-C110, C198-C267, C201-C261, C225-C236, C294-C361, C297-C355, and C320-C330. Positions 270-376 (ADAIGPALPA…PLQCFQTPHL (107 aa)) are excised as a propeptide. The N-linked (GlcNAc...) asparagine glycan is linked to N306.

Homodimer; disulfide-linked.

It localises to the secreted. The protein localises to the extracellular space. It is found in the surface film. In terms of biological role, pulmonary surfactant-associated proteins promote alveolar stability by lowering the surface tension at the air-liquid interface in the peripheral air spaces. SP-B increases the collapse pressure of palmitic acid to nearly 70 millinewtons per meter. This chain is Pulmonary surfactant-associated protein B (Sftpb), found in Rattus norvegicus (Rat).